The following is a 495-amino-acid chain: Probable polyamine transporter At1g31830 (495 aa).

Transmembrane regions (helical) follow at residues 49–69 (VSMLPLVFLIFYEVSGGPFGV), 79–99 (LLALLGFVIFPFIWSIPEALI), 112–132 (GYVVWVSSALGPFWGFQQGWM), 156–176 (VPALGSGLPRVASILVLTILL), 186–206 (IVGWVAVLMGVFSILPFAVMG), 230–250 (LYLNTLFWNLNYWDSISTLAG), 267–287 (VILVACSYIFPLLAGIGAIPL), 357–377 (TPLLGILFSASGVVLLSWLSF), 380–400 (IVAAENLLYCVGMILEFIAFV), 417–437 (IGTTGSILMCIPPTILICAVV), and 442–462 (LKVAAVSIVMMIIGFLIHPLL).

It belongs to the amino acid-polyamine-organocation (APC) superfamily. Polyamine:cation symporter (PHS) (TC 2.A.3.12) family.

It localises to the cell membrane. Its function is as follows. Probable cell membrane polyamine/proton symporter involved in the polyamine uptake in cells. This Arabidopsis thaliana (Mouse-ear cress) protein is Probable polyamine transporter At1g31830.